Here is a 73-residue protein sequence, read N- to C-terminus: RNA-binding protein Hfq (73 aa).

Positions 8-68 (DQFLNQIRKE…ISTFAPQKNV (61 aa)) constitute a Sm domain.

This sequence belongs to the Hfq family. As to quaternary structure, homohexamer.

Functionally, RNA chaperone that binds small regulatory RNA (sRNAs) and mRNAs to facilitate mRNA translational regulation in response to envelope stress, environmental stress and changes in metabolite concentrations. Also binds with high specificity to tRNAs. This Bacillus subtilis (strain 168) protein is RNA-binding protein Hfq.